A 289-amino-acid chain; its full sequence is Acetyl-coenzyme A carboxylase carboxyl transferase subunit beta (289 aa).

A CoA carboxyltransferase N-terminal domain is found at M34–F289. Zn(2+) contacts are provided by C38, C41, C57, and C60. The C4-type zinc finger occupies C38–C60.

The protein belongs to the AccD/PCCB family. In terms of assembly, acetyl-CoA carboxylase is a heterohexamer composed of biotin carboxyl carrier protein (AccB), biotin carboxylase (AccC) and two subunits each of ACCase subunit alpha (AccA) and ACCase subunit beta (AccD). It depends on Zn(2+) as a cofactor.

It localises to the cytoplasm. It catalyses the reaction N(6)-carboxybiotinyl-L-lysyl-[protein] + acetyl-CoA = N(6)-biotinyl-L-lysyl-[protein] + malonyl-CoA. It participates in lipid metabolism; malonyl-CoA biosynthesis; malonyl-CoA from acetyl-CoA: step 1/1. Its function is as follows. Component of the acetyl coenzyme A carboxylase (ACC) complex. Biotin carboxylase (BC) catalyzes the carboxylation of biotin on its carrier protein (BCCP) and then the CO(2) group is transferred by the transcarboxylase to acetyl-CoA to form malonyl-CoA. This chain is Acetyl-coenzyme A carboxylase carboxyl transferase subunit beta, found in Clostridium botulinum (strain Loch Maree / Type A3).